The chain runs to 209 residues: Protein GrpE (209 aa).

The disordered stretch occupies residues 1-63 (MKKSRKKENM…NPEEACREEN (63 aa)). 2 stretches are compositionally biased toward basic and acidic residues: residues 7-42 (KENMDSKERNQKEAERSEARNSESPAEKAGETKVSP) and 50-63 (EAEKNPEEACREEN).

It belongs to the GrpE family. As to quaternary structure, homodimer.

Its subcellular location is the cytoplasm. In terms of biological role, participates actively in the response to hyperosmotic and heat shock by preventing the aggregation of stress-denatured proteins, in association with DnaK and GrpE. It is the nucleotide exchange factor for DnaK and may function as a thermosensor. Unfolded proteins bind initially to DnaJ; upon interaction with the DnaJ-bound protein, DnaK hydrolyzes its bound ATP, resulting in the formation of a stable complex. GrpE releases ADP from DnaK; ATP binding to DnaK triggers the release of the substrate protein, thus completing the reaction cycle. Several rounds of ATP-dependent interactions between DnaJ, DnaK and GrpE are required for fully efficient folding. This is Protein GrpE from Methanosarcina mazei (strain ATCC BAA-159 / DSM 3647 / Goe1 / Go1 / JCM 11833 / OCM 88) (Methanosarcina frisia).